Here is an 843-residue protein sequence, read N- to C-terminus: Protein piwi (843 aa).

The short motif at 1-12 (MADDQGRGRRRP) is the Nuclear localization signal element. Residues 1-76 (MADDQGRGRR…TERKPWGDQY (76 aa)) are disordered. The interaction with CBX5 and papi stretch occupies residues 1 to 257 (MADDQGRGRR…ILLGTEITHK (257 aa)). A symmetric dimethylarginine mark is found at R7, R9, R10, and R11. Over residues 41–72 (PRADPRIEASRERRALEEAPRREGGPTERKPW) the composition is skewed to basic and acidic residues. One can recognise a PAZ domain in the interval 263 to 372 (TIYDIMRRCS…LIPELCRVTG (110 aa)). The region spanning 538–829 (LILCLVPNDN…LATLVGTNLH (292 aa)) is the Piwi domain. Q589 is a Mg(2+) binding site. Active-site residues include D614 and D685. Residue L843 participates in Mg(2+) binding.

It belongs to the argonaute family. Piwi subfamily. In terms of assembly, in the ovaries, part of a complex composed of at least Panx, nxf2, piwi and Nxt1. The complex is knowns as Panx-induced co-transcriptional silencing (PICTS) complex, Panx-nxf2-dependent TAP/p15 silencing (Pandas complex), SFiNX (silencing factor interacting nuclear export variant) or piwi-Panx-nxf2-p15 (PPNP) complex. Interacts with vas; this interaction is RNA-independent. Interacts with Dcr-1 and Fmr1; these interactions occur in polar granules. Interacts (via N-terminal region) with CBX5 (via chromoshadow domain). Forms a complex with Hsp83 and Hop; probably Hop mediates the interaction between piwi and Hsp83. Forms a complex with Yb body components armi and fs(1)Yb; this interaction is required for proper piRNA loading and nuclear localization of piwi. Interaction of Piwi and fs(1)Yb is likely to occur via armi. Interacts (via the N-terminal region when unmethylated or symmetrically methylated at Arg-10) with papi (via Tudor domain). Interacts with vret. Interacts with Panx. Interacts with arx. Interacts with Tudor-SN. Interacts with Nup358 (via N-terminus). Associates with the nuclear pore complex via interaction with Elys. Interacts with thoc5; the interaction might be partly RNA-mediated. Interacts with xmas-2. Symmetrically dimethylated, most likely by csul. Methylation at Arg-10 enhances binding to papi whereas methylation at Arg-7, Arg-9 or Arg-11 reduces binding affinity to papi. In terms of processing, phosphorylated on serine and tyrosine residues in an Hsp83-dependent manner. In terms of tissue distribution, expressed in ovaries (at protein level). Expressed somatically in ovariole terminal filament cells, epithelial sheath cells, cap cells and follicle cells (at protein level). Expressed in nurse cells and oocytes in developing egg chambers (at protein level). In embryos, accumulates in pole cells (at protein level). In larval and adult testis, expressed in a germinal proliferative center at the apical tip containing somatic hub cells and mitotically dividing germ stem cells (at protein level).

The protein localises to the cytoplasm. Its subcellular location is the nucleus. The protein resides in the nucleoplasm. It localises to the chromosome. Acts via the piwi-interacting RNA (piRNA) metabolic process, which mediates the repression of transposable elements during meiosis by forming complexes composed of piRNAs and Piwi proteins and governs the methylation and subsequent repression of transposons. Directly binds piRNAs, a class of 24 to 30 nucleotide RNAs that are generated by a Dicer-independent mechanism and are primarily derived from transposons and other repeated sequence elements. In ovarian somatic cells, mediates silencing of transposable elements at the transcriptional level in a mael-dependent manner. Involved in silencing of long terminal repeat (LTR) retrotransposons in male germline. In testis, regulates spermatogenesis together with Tudor-SN. In germ cells, mediates silencing at both transcriptional and post-transcriptional levels and is involved in the maintenance of populations of primary and secondary piRNAs. Piwi-mediated transcriptional silencing is accompanied by the formation of His3 trimethylated on 'Lys-10' (H3K9me3) associated euchromatin and heterochromatin. In ovary, associates predominantly with antisense piRNAs that contain uridine at their 5' end. Association with sense piRNAs is also observed but to a lesser extent. Mediates a somatic signaling mechanism required for the maintenance of germline stem cells to produce and maintain a daughter germline stem cell. It is not essential for the further differentiation of the committed daughter cell. Acts cell autonomously to promote germline stem cell division. Its role in stem cell maintenance does not seem to require nuclear localization. Required maternally for the posterior localization of osk and vas and for pole cell formation during oogenesis and early embryogenesis. Together with Hop and Hsp83, mediates canalization, also known as developmental robustness, likely via epigenetic silencing of existing genetic variants and suppression of transposon-induced new genetic variation. Shows RNA cleavage activity, although is not required for any of its known functions. In the ovaries, forms a complex with nxf2, Panx and Nxt1 which acts as effectors of cotranscriptional transposon silencing. The chain is Protein piwi from Drosophila melanogaster (Fruit fly).